A 382-amino-acid polypeptide reads, in one-letter code: Flap endonuclease 1 (382 aa).

The segment at 1–105 (MGIKGLNAII…HELTKRSSRR (105 aa)) is N-domain. Asp34 is a Mg(2+) binding site. Residues Arg47 and Arg71 each coordinate DNA. Residues Asp87, Glu156, Glu158, Asp177, and Asp179 each contribute to the Mg(2+) site. The interval 120–251 (EKMKQERRLV…VTALKLIKTH (132 aa)) is I-domain. Glu156 provides a ligand contact to DNA. Gly229 and Asp231 together coordinate DNA. Position 231 (Asp231) interacts with Mg(2+). The segment at 339–347 (IQGRLDGFF) is interaction with PCNA. The segment at 358–382 (AAAAKRAQENKKLNKNKNKVTKGRR) is disordered. Residues 370–382 (LNKNKNKVTKGRR) are compositionally biased toward basic residues.

It belongs to the XPG/RAD2 endonuclease family. FEN1 subfamily. In terms of assembly, interacts with PCNA. Three molecules of RAD27 bind to one PCNA trimer with each molecule binding to one PCNA monomer. PCNA stimulates the nuclease activity without altering cleavage specificity. It depends on Mg(2+) as a cofactor. Phosphorylated. Phosphorylation upon DNA damage induces relocalization to the nuclear plasma.

It localises to the nucleus. The protein resides in the nucleolus. It is found in the nucleoplasm. Its subcellular location is the mitochondrion. Structure-specific nuclease with 5'-flap endonuclease and 5'-3' exonuclease activities involved in DNA replication and repair. During DNA replication, cleaves the 5'-overhanging flap structure that is generated by displacement synthesis when DNA polymerase encounters the 5'-end of a downstream Okazaki fragment. It enters the flap from the 5'-end and then tracks to cleave the flap base, leaving a nick for ligation. Also involved in the long patch base excision repair (LP-BER) pathway, by cleaving within the apurinic/apyrimidinic (AP) site-terminated flap. Acts as a genome stabilization factor that prevents flaps from equilibrating into structures that lead to duplications and deletions. Also possesses 5'-3' exonuclease activity on nicked or gapped double-stranded DNA, and exhibits RNase H activity. Also involved in replication and repair of rDNA and in repairing mitochondrial DNA. The sequence is that of Flap endonuclease 1 from Saccharomyces cerevisiae (strain YJM789) (Baker's yeast).